The sequence spans 108 residues: MSDTDYLTRAEAVLAAVERSVDAANDGDADIDLERNGSVLTLTFENGSKIIVNLQPPMKEVWIAAKAGGFHYRFVDGAWRDTRSGDEFFAALTGYATQQAGMPIAFSA.

Belongs to the frataxin family.

In terms of biological role, involved in iron-sulfur (Fe-S) cluster assembly. May act as a regulator of Fe-S biogenesis. This chain is Iron-sulfur cluster assembly protein CyaY, found in Burkholderia mallei (strain NCTC 10247).